A 123-amino-acid chain; its full sequence is Sperm-associated antigen 11A (123 aa).

The first 25 residues, 1-25 (MRQRLLPSVTSLLLVALLFPGSSQA), serve as a signal peptide directing secretion. Asn-29 carries an N-linked (GlcNAc...) asparagine glycan.

It belongs to the SPAG11 family.

The protein resides in the secreted. Has antimicrobial activity against E.coli. Plays a role in the defense response in the male reproductive tract, contributing to sperm maturation, storage and protection. The polypeptide is Sperm-associated antigen 11A (Homo sapiens (Human)).